We begin with the raw amino-acid sequence, 97 residues long: Aspartyl/glutamyl-tRNA(Asn/Gln) amidotransferase subunit C (97 aa).

Belongs to the GatC family. As to quaternary structure, heterotrimer of A, B and C subunits.

The catalysed reaction is L-glutamyl-tRNA(Gln) + L-glutamine + ATP + H2O = L-glutaminyl-tRNA(Gln) + L-glutamate + ADP + phosphate + H(+). It carries out the reaction L-aspartyl-tRNA(Asn) + L-glutamine + ATP + H2O = L-asparaginyl-tRNA(Asn) + L-glutamate + ADP + phosphate + 2 H(+). Functionally, allows the formation of correctly charged Asn-tRNA(Asn) or Gln-tRNA(Gln) through the transamidation of misacylated Asp-tRNA(Asn) or Glu-tRNA(Gln) in organisms which lack either or both of asparaginyl-tRNA or glutaminyl-tRNA synthetases. The reaction takes place in the presence of glutamine and ATP through an activated phospho-Asp-tRNA(Asn) or phospho-Glu-tRNA(Gln). In Prochlorococcus marinus subsp. pastoris (strain CCMP1986 / NIES-2087 / MED4), this protein is Aspartyl/glutamyl-tRNA(Asn/Gln) amidotransferase subunit C.